A 489-amino-acid chain; its full sequence is Para-nitrobenzyl esterase (489 aa).

The Acyl-ester intermediate role is filled by Ser-189. Ser-189 carries the phosphoserine modification. Active-site charge relay system residues include Glu-310 and His-399.

It belongs to the type-B carboxylesterase/lipase family. In terms of assembly, monomer.

Catalyzes hydrolysis of several beta-lactam antibiotic PNB esters to the corresponding free acid and PNB alcohol. The protein is Para-nitrobenzyl esterase (pnbA) of Bacillus subtilis (strain 168).